The primary structure comprises 364 residues: Chorismate synthase (364 aa).

NADP(+) contacts are provided by Arg-48 and Arg-54. FMN-binding positions include 125–127 (RSS), Gly-282, 297–301 (KPPAS), and Arg-323.

The protein belongs to the chorismate synthase family. In terms of assembly, homotetramer. Requires FMNH2 as cofactor.

It carries out the reaction 5-O-(1-carboxyvinyl)-3-phosphoshikimate = chorismate + phosphate. It functions in the pathway metabolic intermediate biosynthesis; chorismate biosynthesis; chorismate from D-erythrose 4-phosphate and phosphoenolpyruvate: step 7/7. In terms of biological role, catalyzes the anti-1,4-elimination of the C-3 phosphate and the C-6 proR hydrogen from 5-enolpyruvylshikimate-3-phosphate (EPSP) to yield chorismate, which is the branch point compound that serves as the starting substrate for the three terminal pathways of aromatic amino acid biosynthesis. This reaction introduces a second double bond into the aromatic ring system. This chain is Chorismate synthase, found in Chloroflexus aurantiacus (strain ATCC 29366 / DSM 635 / J-10-fl).